A 161-amino-acid polypeptide reads, in one-letter code: Serine-protein kinase RsbW (161 aa).

Belongs to the anti-sigma-factor family.

The enzyme catalyses L-seryl-[protein] + ATP = O-phospho-L-seryl-[protein] + ADP + H(+). It carries out the reaction L-threonyl-[protein] + ATP = O-phospho-L-threonyl-[protein] + ADP + H(+). Negative regulator of sigma-B activity. Phosphorylates and inactivates its specific antagonist protein, RsbV. Upon phosphorylation of RsbV, RsbW is released and binds to sigma-B, thereby blocking its ability to form an RNA polymerase holoenzyme (E-sigma-B). The sequence is that of Serine-protein kinase RsbW from Bacillus licheniformis (strain ATCC 14580 / DSM 13 / JCM 2505 / CCUG 7422 / NBRC 12200 / NCIMB 9375 / NCTC 10341 / NRRL NRS-1264 / Gibson 46).